The primary structure comprises 352 residues: Photosystem II D2 protein (352 aa).

The helical transmembrane segment at 40–60 (CAYMALGGWLTGTTFVTSWYT) threads the bilayer. Residue H117 participates in chlorophyll a binding. A helical transmembrane segment spans residues 124–140 (GFMLRQFEIARLVGIRP). Pheophytin a is bound by residues Q129 and N142. A helical membrane pass occupies residues 152 to 165 (VFVSVFLMYPLGQS). Chlorophyll a is bound at residue H197. The helical transmembrane segment at 207–227 (GALLCAIHGATVENTLFEDGD) threads the bilayer. A plastoquinone contacts are provided by H214 and F261. H214 lines the Fe cation pocket. Fe cation is bound at residue H268. The helical transmembrane segment at 278-294 (GLWTSSIGIIGLALNLR) threads the bilayer.

This sequence belongs to the reaction center PufL/M/PsbA/D family. As to quaternary structure, PSII is composed of 1 copy each of membrane proteins PsbA, PsbB, PsbC, PsbD, PsbE, PsbF, PsbH, PsbI, PsbJ, PsbK, PsbL, PsbM, PsbT, PsbX, PsbY, PsbZ, Psb30/Ycf12, peripheral proteins PsbO, CyanoQ (PsbQ), PsbU, PsbV and a large number of cofactors. It forms dimeric complexes. It depends on The D1/D2 heterodimer binds P680, chlorophylls that are the primary electron donor of PSII, and subsequent electron acceptors. It shares a non-heme iron and each subunit binds pheophytin, quinone, additional chlorophylls, carotenoids and lipids. There is also a Cl(-1) ion associated with D1 and D2, which is required for oxygen evolution. The PSII complex binds additional chlorophylls, carotenoids and specific lipids. as a cofactor.

The protein resides in the cellular thylakoid membrane. It catalyses the reaction 2 a plastoquinone + 4 hnu + 2 H2O = 2 a plastoquinol + O2. In terms of biological role, photosystem II (PSII) is a light-driven water:plastoquinone oxidoreductase that uses light energy to abstract electrons from H(2)O, generating O(2) and a proton gradient subsequently used for ATP formation. It consists of a core antenna complex that captures photons, and an electron transfer chain that converts photonic excitation into a charge separation. The D1/D2 (PsbA/PsbD) reaction center heterodimer binds P680, the primary electron donor of PSII as well as several subsequent electron acceptors. D2 is needed for assembly of a stable PSII complex. This Synechococcus sp. (strain RCC307) protein is Photosystem II D2 protein.